Consider the following 67-residue polypeptide: MGEISITKLLVIAALVVLLFGTKKLRTLGGDLGTAIKGFKKAMNDDDATAKRDADSGIQAEKLSHKE.

Residues 4-21 (ISITKLLVIAALVVLLFG) form a helical membrane-spanning segment.

It belongs to the TatA/E family. TatE subfamily.

The protein localises to the cell inner membrane. Its function is as follows. Part of the twin-arginine translocation (Tat) system that transports large folded proteins containing a characteristic twin-arginine motif in their signal peptide across membranes. TatE shares overlapping functions with TatA. This chain is Probable Sec-independent protein translocase protein TatE, found in Citrobacter rodentium (strain ICC168) (Citrobacter freundii biotype 4280).